The sequence spans 525 residues: Peptide chain release factor 3 (525 aa).

Residues 11–279 form the tr-type G domain; that stretch reads DKRRTFAIIS…TYLEYAPQPA (269 aa). GTP contacts are provided by residues 20–27, 88–92, and 142–145; these read SHPDAGKT, DTPGH, and NKLD.

It belongs to the TRAFAC class translation factor GTPase superfamily. Classic translation factor GTPase family. PrfC subfamily.

Its subcellular location is the cytoplasm. Its function is as follows. Increases the formation of ribosomal termination complexes and stimulates activities of RF-1 and RF-2. It binds guanine nucleotides and has strong preference for UGA stop codons. It may interact directly with the ribosome. The stimulation of RF-1 and RF-2 is significantly reduced by GTP and GDP, but not by GMP. The sequence is that of Peptide chain release factor 3 from Levilactobacillus brevis (strain ATCC 367 / BCRC 12310 / CIP 105137 / JCM 1170 / LMG 11437 / NCIMB 947 / NCTC 947) (Lactobacillus brevis).